The primary structure comprises 714 residues: Fatty acid oxidation complex subunit alpha (714 aa).

The segment at 1-190 (MEMASVFTLN…KLGLVDDVVP (190 aa)) is enoyl-CoA hydratase. Residues 306-714 (APLNSVGILG…FWKTTATDLQ (409 aa)) are 3-hydroxyacyl-CoA dehydrogenase.

In the N-terminal section; belongs to the enoyl-CoA hydratase/isomerase family. It in the central section; belongs to the 3-hydroxyacyl-CoA dehydrogenase family. Heterotetramer of two alpha chains (FadJ) and two beta chains (FadI).

It is found in the cytoplasm. The catalysed reaction is a (3S)-3-hydroxyacyl-CoA = a (2E)-enoyl-CoA + H2O. It carries out the reaction a 4-saturated-(3S)-3-hydroxyacyl-CoA = a (3E)-enoyl-CoA + H2O. It catalyses the reaction a (3S)-3-hydroxyacyl-CoA + NAD(+) = a 3-oxoacyl-CoA + NADH + H(+). The enzyme catalyses (3S)-3-hydroxybutanoyl-CoA = (3R)-3-hydroxybutanoyl-CoA. Its pathway is lipid metabolism; fatty acid beta-oxidation. In terms of biological role, catalyzes the formation of a hydroxyacyl-CoA by addition of water on enoyl-CoA. Also exhibits 3-hydroxyacyl-CoA epimerase and 3-hydroxyacyl-CoA dehydrogenase activities. The polypeptide is Fatty acid oxidation complex subunit alpha (Escherichia coli O139:H28 (strain E24377A / ETEC)).